Reading from the N-terminus, the 167-residue chain is Ribosome maturation factor RimM (167 aa).

The region spanning 94–165 (EHEYYYSDII…TIKITPMEGL (72 aa)) is the PRC barrel domain.

The protein belongs to the RimM family. In terms of assembly, binds ribosomal protein uS19.

The protein localises to the cytoplasm. An accessory protein needed during the final step in the assembly of 30S ribosomal subunit, possibly for assembly of the head region. Essential for efficient processing of 16S rRNA. May be needed both before and after RbfA during the maturation of 16S rRNA. It has affinity for free ribosomal 30S subunits but not for 70S ribosomes. The chain is Ribosome maturation factor RimM from Staphylococcus epidermidis (strain ATCC 12228 / FDA PCI 1200).